We begin with the raw amino-acid sequence, 146 residues long: Bacterial hemoglobin (146 aa).

The 138-residue stretch at 1–138 folds into the Globin domain; sequence MLDQQTINII…IADVFIQVEA (138 aa). Glutamine 53 and histidine 85 together coordinate heme b.

It belongs to the globin family. Homodimer.

Its function is as follows. This protein functions as a terminal oxidase. The sequence is that of Bacterial hemoglobin (vhb) from Vitreoscilla stercoraria.